An 84-amino-acid polypeptide reads, in one-letter code: Delta-conotoxin-like MVIA (84 aa).

Residues 1–22 form the signal peptide; that stretch reads MKLTCVMIVAVLFLTTWTFVTA. Positions 23–49 are excised as a propeptide; it reads DDSRYGLKNLFPKARHEMKNPEASKLN. 3 cysteine pairs are disulfide-bonded: cysteine 54-cysteine 69, cysteine 61-cysteine 73, and cysteine 68-cysteine 77. A 4-hydroxyproline modification is found at proline 65. Serine 83 carries the serine amide modification.

The protein belongs to the conotoxin O1 superfamily. As to expression, expressed by the venom duct.

The protein resides in the secreted. In terms of biological role, delta-conotoxins bind to site 6 of voltage-gated sodium channels (Nav) and inhibit the inactivation process. This Conus magus (Magical cone) protein is Delta-conotoxin-like MVIA.